A 397-amino-acid chain; its full sequence is Putative galactokinase (397 aa).

Ser-78 is an ATP binding site. The Proton acceptor role is filled by Asp-182.

Belongs to the GHMP kinase family. GalK subfamily.

The protein localises to the cytoplasm. The enzyme catalyses alpha-D-galactose + ATP = alpha-D-galactose 1-phosphate + ADP + H(+). The protein operates within carbohydrate metabolism; galactose metabolism. Functionally, catalyzes the transfer of the gamma-phosphate of ATP to D-galactose to form alpha-D-galactose-1-phosphate (Gal-1-P). This is Putative galactokinase (galK) from Treponema pallidum (strain Nichols).